Reading from the N-terminus, the 625-residue chain is Chaperone protein HtpG (625 aa).

Positions Met-1–Arg-341 are a; substrate-binding. The segment at Glu-342 to Lys-551 is b. The tract at residues Val-552–Ala-625 is c.

Belongs to the heat shock protein 90 family. Homodimer.

It is found in the cytoplasm. Functionally, molecular chaperone. Has ATPase activity. The sequence is that of Chaperone protein HtpG from Halalkalibacterium halodurans (strain ATCC BAA-125 / DSM 18197 / FERM 7344 / JCM 9153 / C-125) (Bacillus halodurans).